A 723-amino-acid polypeptide reads, in one-letter code: LPS-assembly protein LptD (723 aa).

Residues 1 to 23 (MNTLKLCLILYACLVLLPVRVMS) form the signal peptide.

This sequence belongs to the LptD family. Component of the lipopolysaccharide transport and assembly complex. Interacts with LptE and LptA.

It is found in the cell outer membrane. Its function is as follows. Together with LptE, is involved in the assembly of lipopolysaccharide (LPS) at the surface of the outer membrane. The protein is LPS-assembly protein LptD of Nitrosomonas europaea (strain ATCC 19718 / CIP 103999 / KCTC 2705 / NBRC 14298).